A 470-amino-acid chain; its full sequence is 6-phospho-beta-galactosidase (470 aa).

D-galactose 6-phosphate is bound by residues Gln19, His116, Asn159, Glu160, and Asn297. Catalysis depends on Glu160, which acts as the Proton donor. Catalysis depends on Glu375, which acts as the Nucleophile. Positions 430, 431, 437, and 439 each coordinate D-galactose 6-phosphate.

It belongs to the glycosyl hydrolase 1 family.

It catalyses the reaction a 6-phospho-beta-D-galactoside + H2O = D-galactose 6-phosphate + an alcohol. Its pathway is carbohydrate metabolism; lactose degradation; D-galactose 6-phosphate and beta-D-glucose from lactose 6-phosphate: step 1/1. This chain is 6-phospho-beta-galactosidase, found in Staphylococcus epidermidis (strain ATCC 35984 / DSM 28319 / BCRC 17069 / CCUG 31568 / BM 3577 / RP62A).